The chain runs to 430 residues: Enolase (430 aa).

Gln-163 contributes to the (2R)-2-phosphoglycerate binding site. The active-site Proton donor is Glu-205. Mg(2+)-binding residues include Asp-242, Glu-287, and Asp-314. (2R)-2-phosphoglycerate contacts are provided by Lys-339, Arg-368, Ser-369, and Lys-390. Lys-339 serves as the catalytic Proton acceptor.

It belongs to the enolase family. Mg(2+) serves as cofactor.

The protein resides in the cytoplasm. It is found in the secreted. The protein localises to the cell surface. The catalysed reaction is (2R)-2-phosphoglycerate = phosphoenolpyruvate + H2O. It participates in carbohydrate degradation; glycolysis; pyruvate from D-glyceraldehyde 3-phosphate: step 4/5. In terms of biological role, catalyzes the reversible conversion of 2-phosphoglycerate (2-PG) into phosphoenolpyruvate (PEP). It is essential for the degradation of carbohydrates via glycolysis. This is Enolase from Bacillus velezensis (strain DSM 23117 / BGSC 10A6 / LMG 26770 / FZB42) (Bacillus amyloliquefaciens subsp. plantarum).